The primary structure comprises 249 residues: Eukaryotic translation initiation factor 6 (249 aa).

Belongs to the eIF-6 family. Monomer. Associates with the 60S ribosomal subunit.

The protein localises to the cytoplasm. It is found in the nucleus. The protein resides in the nucleolus. Its function is as follows. Binds to the 60S ribosomal subunit and prevents its association with the 40S ribosomal subunit to form the 80S initiation complex in the cytoplasm. May also be involved in ribosome biogenesis. The sequence is that of Eukaryotic translation initiation factor 6 from Babesia bovis.